A 78-amino-acid chain; its full sequence is MQPQESHVHYSRWEDGSRDGVSLGAVSSTEEASRCRRISQRLCTGKLGIAMKVLGGVALFWIIFILGYLTGYYVHKCK.

At Met1 the chain carries N-acetylmethionine. The segment covering 1–18 (MQPQESHVHYSRWEDGSR) has biased composition (basic and acidic residues). The tract at residues 1–20 (MQPQESHVHYSRWEDGSRDG) is disordered. The Cytoplasmic segment spans residues 1–46 (MQPQESHVHYSRWEDGSRDGVSLGAVSSTEEASRCRRISQRLCTGK). Phosphoserine occurs at positions 6, 17, 22, and 27. Residues 47 to 67 (LGIAMKVLGGVALFWIIFILG) form a helical; Signal-anchor for type II membrane protein membrane-spanning segment. At 68-78 (YLTGYYVHKCK) the chain is on the extracellular side. Positions 68–78 (YLTGYYVHKCK) are displays the Vel antigen.

The protein belongs to the SMIM1 family. Homooligomer; disulfide-linked. Highly expressed in the bone marrow and expressed at lower levels in non-hematopoietic tissues. Highly expressed in erythroleukemia cell lines. Up-regulated in CD34+ hematopoietic progenitors cultured toward red blood cells.

The protein localises to the cell membrane. Its function is as follows. Regulator of red blood cell formation. The polypeptide is Small integral membrane protein 1 (Homo sapiens (Human)).